A 295-amino-acid polypeptide reads, in one-letter code: Probable palmitoyltransferase ZDHHC24 (295 aa).

The Cytoplasmic portion of the chain corresponds to 1–20; the sequence is MTSFMSRVWCKVESTGRQLP. A helical membrane pass occupies residues 21–41; that stretch reads IVLNAVLVFSITAEVSYLVLV. The Extracellular segment spans residues 42–60; the sequence is EAPFEPEQKKTDWSTIWTG. The helical transmembrane segment at 61 to 81 threads the bilayer; that stretch reads LHLFAQYFMLGNITWNASLFV. The Cytoplasmic portion of the chain corresponds to 82–151; it reads KTNPSIRGVF…HNYRYFLTCL (70 aa). The DHHC domain maps to 102–152; that stretch reads RYCYNCETHTPPRCSHCYDCNVCVLRRDHHCVFFGQCVGFHNYRYFLTCLL. Cysteine 132 acts as the S-palmitoyl cysteine intermediate in catalysis. The helical transmembrane segment at 152–172 threads the bilayer; the sequence is LFMWAGLLYAVVMNAEVFIFI. Residues 173–176 are Extracellular-facing; the sequence is LKEG. A helical membrane pass occupies residues 177-197; sequence VTFHSVMLLLVPWIMLVSGQV. Topologically, residues 198 to 203 are cytoplasmic; sequence TTRAFA. The helical transmembrane segment at 204–224 threads the bilayer; sequence FAFIADTCVVGFLLVAAFLFF. Residues 225 to 295 are Extracellular-facing; it reads HVALMLRGQT…SLEPKKQAVH (71 aa).

The protein belongs to the DHHC palmitoyltransferase family.

It localises to the membrane. The enzyme catalyses L-cysteinyl-[protein] + hexadecanoyl-CoA = S-hexadecanoyl-L-cysteinyl-[protein] + CoA. Functionally, probable palmitoyltransferase that could catalyze the addition of palmitate onto various protein substrates. This Danio rerio (Zebrafish) protein is Probable palmitoyltransferase ZDHHC24.